A 229-amino-acid polypeptide reads, in one-letter code: 5'-methylthioadenosine/S-adenosylhomocysteine nucleosidase (229 aa).

Glutamate 12 (proton acceptor) is an active-site residue. Residues glycine 78, methionine 152, and 173–174 contribute to the substrate site; that span reads ME. Residue aspartate 197 is the Proton donor of the active site.

The protein belongs to the PNP/UDP phosphorylase family. MtnN subfamily.

The catalysed reaction is S-adenosyl-L-homocysteine + H2O = S-(5-deoxy-D-ribos-5-yl)-L-homocysteine + adenine. It catalyses the reaction S-methyl-5'-thioadenosine + H2O = 5-(methylsulfanyl)-D-ribose + adenine. It carries out the reaction 5'-deoxyadenosine + H2O = 5-deoxy-D-ribose + adenine. It functions in the pathway amino-acid biosynthesis; L-methionine biosynthesis via salvage pathway; S-methyl-5-thio-alpha-D-ribose 1-phosphate from S-methyl-5'-thioadenosine (hydrolase route): step 1/2. Catalyzes the irreversible cleavage of the glycosidic bond in both 5'-methylthioadenosine (MTA) and S-adenosylhomocysteine (SAH/AdoHcy) to adenine and the corresponding thioribose, 5'-methylthioribose and S-ribosylhomocysteine, respectively. Also cleaves 5'-deoxyadenosine, a toxic by-product of radical S-adenosylmethionine (SAM) enzymes, into 5-deoxyribose and adenine. The sequence is that of 5'-methylthioadenosine/S-adenosylhomocysteine nucleosidase from Oceanobacillus iheyensis (strain DSM 14371 / CIP 107618 / JCM 11309 / KCTC 3954 / HTE831).